The sequence spans 542 residues: Protein MGF 505-11L (542 aa).

This sequence belongs to the asfivirus MGF 505 family.

Plays a role in virus cell tropism, and may be required for efficient virus replication in macrophages. This African swine fever virus (isolate Pig/Kenya/KEN-50/1950) (ASFV) protein is Protein MGF 505-11L.